Reading from the N-terminus, the 331-residue chain is ADP,ATP carrier protein 2, mitochondrial (331 aa).

3 Solcar repeats span residues 29 to 122, 134 to 226, and 238 to 320; these read KNFA…FKRM, KWFG…LKPV, and ASFA…LQIL. 5 helical membrane passes run 31–58, 99–123, 132–152, 202–223, and 237–257; these read FAID…VKLL, TANV…KRMF, YWKW…SSLF, FNIS…YDSL, and FASF…SYPI. Residues R104 and K116 each coordinate ADP. R261 serves as a coordination point for ADP. Positions 261-266 are important for transport activity; that stretch reads RRRMMM. Residues 261-266 carry the Nucleotide carrier signature motif motif; that stretch reads RRRMMM. A helical transmembrane segment spans residues 297 to 317; that stretch reads AGANILRAIAGAGVLSGYDQL.

This sequence belongs to the mitochondrial carrier (TC 2.A.29) family. In terms of assembly, monomer.

It is found in the mitochondrion inner membrane. It catalyses the reaction ADP(in) + ATP(out) = ADP(out) + ATP(in). The matrix-open state (m-state) is inhibited by the membrane-permeable bongkrekic acid (BKA). The cytoplasmic-open state (c-state) is inhibited by the membrane-impermeable toxic inhibitor carboxyatractyloside (CATR). In terms of biological role, ADP:ATP antiporter that mediates import of ADP into the mitochondrial matrix for ATP synthesis, and export of ATP out to fuel the cell. Cycles between the cytoplasmic-open state (c-state) and the matrix-open state (m-state): operates by the alternating access mechanism with a single substrate-binding site intermittently exposed to either the cytosolic (c-state) or matrix (m-state) side of the inner mitochondrial membrane. The sequence is that of ADP,ATP carrier protein 2, mitochondrial (ANT-G2) from Triticum aestivum (Wheat).